Here is a 120-residue protein sequence, read N- to C-terminus: Probable early E4 13 kDa protein (120 aa).

This is Probable early E4 13 kDa protein from Human adenovirus A serotype 12 (HAdV-12).